A 403-amino-acid polypeptide reads, in one-letter code: Tyrosine--tRNA ligase (403 aa).

Positions 43-52 match the 'HIGH' region motif; it reads PTAPDLHLGH. Positions 227–231 match the 'KMSKS' region motif; sequence KMSKS. Lys-230 lines the ATP pocket. In terms of domain architecture, S4 RNA-binding spans 338 to 399; sequence LPIAQLLKQT…GKRKFARVTI (62 aa).

It belongs to the class-I aminoacyl-tRNA synthetase family. TyrS type 2 subfamily. As to quaternary structure, homodimer.

It is found in the cytoplasm. It carries out the reaction tRNA(Tyr) + L-tyrosine + ATP = L-tyrosyl-tRNA(Tyr) + AMP + diphosphate + H(+). In terms of biological role, catalyzes the attachment of tyrosine to tRNA(Tyr) in a two-step reaction: tyrosine is first activated by ATP to form Tyr-AMP and then transferred to the acceptor end of tRNA(Tyr). The sequence is that of Tyrosine--tRNA ligase from Nitrosospira multiformis (strain ATCC 25196 / NCIMB 11849 / C 71).